We begin with the raw amino-acid sequence, 620 residues long: Chaperone protein HscA homolog (620 aa).

Belongs to the heat shock protein 70 family.

Its function is as follows. Chaperone involved in the maturation of iron-sulfur cluster-containing proteins. Has a low intrinsic ATPase activity which is markedly stimulated by HscB. This is Chaperone protein HscA homolog from Pseudomonas fluorescens (strain SBW25).